A 487-amino-acid polypeptide reads, in one-letter code: Cell wall protein TIR4 (487 aa).

Residues Met1 to Ala22 form the signal peptide. 11 consecutive repeat copies span residues Ser137 to Val148, Ser149 to Val160, Ser161 to Val172, Ser173 to Ala184, Ser185 to Val196, Ser197 to Ala208, Ser209 to Val220, Ser221 to Val232, Ser233 to Ala244, Ser245 to Val256, and Ser257 to Thr268. Positions Ser137 to Thr268 are 11 X 12 AA approximate tandem repeats, Ser-rich. Residues Glu206 to Ser299 are disordered. N-linked (GlcNAc...) asparagine glycans are attached at residues Asn327, Asn348, Asn368, Asn403, and Asn404. Asn465 carries the GPI-anchor amidated asparagine lipid modification. The propeptide at Gly466–Leu487 is removed in mature form.

This sequence belongs to the SRP1/TIP1 family. The GPI-anchor is attached to the protein in the endoplasmic reticulum and serves to target the protein to the cell surface. There, the glucosamine-inositol phospholipid moiety is cleaved off and the GPI-modified mannoprotein is covalently attached via its lipidless GPI glycan remnant to the 1,6-beta-glucan of the outer cell wall layer.

It is found in the secreted. Its subcellular location is the cell wall. The protein resides in the membrane. Component of the cell wall. Required for anaerobic growth. The sequence is that of Cell wall protein TIR4 (TIR4) from Saccharomyces cerevisiae (strain ATCC 204508 / S288c) (Baker's yeast).